Reading from the N-terminus, the 172-residue chain is Adenine phosphoribosyltransferase (172 aa).

The protein belongs to the purine/pyrimidine phosphoribosyltransferase family. As to quaternary structure, homodimer.

The protein resides in the cytoplasm. The catalysed reaction is AMP + diphosphate = 5-phospho-alpha-D-ribose 1-diphosphate + adenine. Its pathway is purine metabolism; AMP biosynthesis via salvage pathway; AMP from adenine: step 1/1. Its function is as follows. Catalyzes a salvage reaction resulting in the formation of AMP, that is energically less costly than de novo synthesis. This Roseiflexus sp. (strain RS-1) protein is Adenine phosphoribosyltransferase.